The primary structure comprises 282 residues: Pantothenate synthetase (282 aa).

30 to 37 (MGALHAGH) serves as a coordination point for ATP. Residue His37 is the Proton donor of the active site. Gln61 contributes to the (R)-pantoate binding site. Gln61 is a binding site for beta-alanine. 147-150 (GEKD) provides a ligand contact to ATP. Gln153 is a binding site for (R)-pantoate. ATP-binding positions include Val177 and 185 to 188 (LSSR).

Belongs to the pantothenate synthetase family. Homodimer.

Its subcellular location is the cytoplasm. The catalysed reaction is (R)-pantoate + beta-alanine + ATP = (R)-pantothenate + AMP + diphosphate + H(+). It functions in the pathway cofactor biosynthesis; (R)-pantothenate biosynthesis; (R)-pantothenate from (R)-pantoate and beta-alanine: step 1/1. Its function is as follows. Catalyzes the condensation of pantoate with beta-alanine in an ATP-dependent reaction via a pantoyl-adenylate intermediate. This chain is Pantothenate synthetase, found in Phocaeicola vulgatus (strain ATCC 8482 / DSM 1447 / JCM 5826 / CCUG 4940 / NBRC 14291 / NCTC 11154) (Bacteroides vulgatus).